Consider the following 1792-residue polypeptide: Protein TIC 214 (1792 aa).

A run of 6 helical transmembrane segments spans residues 18-38, 64-84, 87-107, 129-149, 165-185, and 221-241; these read IINS…FSIG, FITG…HLAL, PHII…GNNH, IFFH…SSIL, IFLI…MKWI, and IFLV…PPPF.

This sequence belongs to the TIC214 family. In terms of assembly, part of the Tic complex.

It localises to the plastid. The protein resides in the chloroplast inner membrane. Functionally, involved in protein precursor import into chloroplasts. May be part of an intermediate translocation complex acting as a protein-conducting channel at the inner envelope. This chain is Protein TIC 214, found in Glycine max (Soybean).